The primary structure comprises 388 residues: Proline-rich protein 5 (388 aa).

2 interaction with RICTOR regions span residues Met-10–Gly-95 and His-188–His-218. Residues Ser-12–Gly-31 form a disordered region. Positions Leu-18–Gly-31 are enriched in basic and acidic residues. Phosphoserine is present on Ser-252. The interval Ser-254 to Val-388 is disordered. Over residues Thr-336–Glu-346 the composition is skewed to polar residues.

This sequence belongs to the PROTOR family. Associated component of the mechanistic target of rapamycin complex 2 (mTORC2). Binds directly to MTOR and RICTOR within the TORC2 complex. As to expression, most abundant in kidney and liver. Also highly expressed in brain, spleen, testis and placenta. Overexpressed in several colorectal tumors.

Functionally, associated subunit of mTORC2, which regulates cell growth and survival in response to hormonal signals. mTORC2 is activated by growth factors, but, in contrast to mTORC1, seems to be nutrient-insensitive. mTORC2 seems to function upstream of Rho GTPases to regulate the actin cytoskeleton, probably by activating one or more Rho-type guanine nucleotide exchange factors. PRR5 plays an important role in regulation of PDGFRB expression and in modulation of platelet-derived growth factor signaling. May act as a tumor suppressor in breast cancer. In Homo sapiens (Human), this protein is Proline-rich protein 5 (PRR5).